A 485-amino-acid polypeptide reads, in one-letter code: Glutamyl-tRNA(Gln) amidotransferase subunit A (485 aa).

Active-site charge relay system residues include Lys74 and Ser149. The active-site Acyl-ester intermediate is the Ser173.

Belongs to the amidase family. GatA subfamily. Heterotrimer of A, B and C subunits.

The enzyme catalyses L-glutamyl-tRNA(Gln) + L-glutamine + ATP + H2O = L-glutaminyl-tRNA(Gln) + L-glutamate + ADP + phosphate + H(+). In terms of biological role, allows the formation of correctly charged Gln-tRNA(Gln) through the transamidation of misacylated Glu-tRNA(Gln) in organisms which lack glutaminyl-tRNA synthetase. The reaction takes place in the presence of glutamine and ATP through an activated gamma-phospho-Glu-tRNA(Gln). The protein is Glutamyl-tRNA(Gln) amidotransferase subunit A of Synechococcus sp. (strain RCC307).